A 74-amino-acid polypeptide reads, in one-letter code: Cytochrome c oxidase subunit 2 (74 aa).

Over 1–14 (MAHPMQLGFQDAAS) the chain is Mitochondrial intermembrane. Residues 15-45 (PVMEELLHFHDHALMIVFLISTAVLYIIVVT) traverse the membrane as a helical segment. The Mitochondrial matrix segment spans residues 46–74 (VTTKLTDKYVLDAQEIEMVWTIMPAVVLI).

Belongs to the cytochrome c oxidase subunit 2 family. As to quaternary structure, component of the cytochrome c oxidase (complex IV, CIV), a multisubunit enzyme composed of 14 subunits. The complex is composed of a catalytic core of 3 subunits MT-CO1, MT-CO2 and MT-CO3, encoded in the mitochondrial DNA, and 11 supernumerary subunits COX4I, COX5A, COX5B, COX6A, COX6B, COX6C, COX7A, COX7B, COX7C, COX8 and NDUFA4, which are encoded in the nuclear genome. The complex exists as a monomer or a dimer and forms supercomplexes (SCs) in the inner mitochondrial membrane with NADH-ubiquinone oxidoreductase (complex I, CI) and ubiquinol-cytochrome c oxidoreductase (cytochrome b-c1 complex, complex III, CIII), resulting in different assemblies (supercomplex SCI(1)III(2)IV(1) and megacomplex MCI(2)III(2)IV(2)). Found in a complex with TMEM177, COA6, COX18, COX20, SCO1 and SCO2. Interacts with TMEM177 in a COX20-dependent manner. Interacts with COX20. Interacts with COX16. The cofactor is Cu cation.

It is found in the mitochondrion inner membrane. The catalysed reaction is 4 Fe(II)-[cytochrome c] + O2 + 8 H(+)(in) = 4 Fe(III)-[cytochrome c] + 2 H2O + 4 H(+)(out). Its function is as follows. Component of the cytochrome c oxidase, the last enzyme in the mitochondrial electron transport chain which drives oxidative phosphorylation. The respiratory chain contains 3 multisubunit complexes succinate dehydrogenase (complex II, CII), ubiquinol-cytochrome c oxidoreductase (cytochrome b-c1 complex, complex III, CIII) and cytochrome c oxidase (complex IV, CIV), that cooperate to transfer electrons derived from NADH and succinate to molecular oxygen, creating an electrochemical gradient over the inner membrane that drives transmembrane transport and the ATP synthase. Cytochrome c oxidase is the component of the respiratory chain that catalyzes the reduction of oxygen to water. Electrons originating from reduced cytochrome c in the intermembrane space (IMS) are transferred via the dinuclear copper A center (CU(A)) of subunit 2 and heme A of subunit 1 to the active site in subunit 1, a binuclear center (BNC) formed by heme A3 and copper B (CU(B)). The BNC reduces molecular oxygen to 2 water molecules using 4 electrons from cytochrome c in the IMS and 4 protons from the mitochondrial matrix. The protein is Cytochrome c oxidase subunit 2 (mt-co2) of Amia calva (Bowfin).